The chain runs to 240 residues: Probable transcriptional regulatory protein HP_0162 (240 aa).

Belongs to the TACO1 family.

The protein localises to the cytoplasm. This is Probable transcriptional regulatory protein HP_0162 from Helicobacter pylori (strain ATCC 700392 / 26695) (Campylobacter pylori).